A 246-amino-acid chain; its full sequence is Proteasome subunit alpha type-6 (246 aa).

The protein belongs to the peptidase T1A family. As to quaternary structure, the 26S proteasome consists of a 20S proteasome core and two 19S regulatory subunits. The 20S proteasome core is composed of 28 subunits that are arranged in four stacked rings, resulting in a barrel-shaped structure. The two end rings are each formed by seven alpha subunits, and the two central rings are each formed by seven beta subunits. The catalytic chamber with the active sites is on the inside of the barrel.

Its subcellular location is the cytoplasm. It is found in the nucleus. The proteasome is a multicatalytic proteinase complex which is characterized by its ability to cleave peptides with Arg, Phe, Tyr, Leu, and Glu adjacent to the leaving group at neutral or slightly basic pH. The proteasome has an ATP-dependent proteolytic activity. This Caenorhabditis elegans protein is Proteasome subunit alpha type-6 (pas-1).